The following is a 171-amino-acid chain: S-ribosylhomocysteine lyase (171 aa).

Fe cation contacts are provided by histidine 54, histidine 58, and cysteine 128.

It belongs to the LuxS family. As to quaternary structure, homodimer. The cofactor is Fe cation.

It catalyses the reaction S-(5-deoxy-D-ribos-5-yl)-L-homocysteine = (S)-4,5-dihydroxypentane-2,3-dione + L-homocysteine. Functionally, involved in the synthesis of autoinducer 2 (AI-2) which is secreted by bacteria and is used to communicate both the cell density and the metabolic potential of the environment. The regulation of gene expression in response to changes in cell density is called quorum sensing. Catalyzes the transformation of S-ribosylhomocysteine (RHC) to homocysteine (HC) and 4,5-dihydroxy-2,3-pentadione (DPD). This is S-ribosylhomocysteine lyase from Citrobacter koseri (strain ATCC BAA-895 / CDC 4225-83 / SGSC4696).